A 384-amino-acid chain; its full sequence is G protein-coupled receptor 88 (384 aa).

At 1-35 (MTNSSSTSTSTTTGGSLLLLCEEEESWAGRRIPVS) the chain is on the extracellular side. N-linked (GlcNAc...) asparagine glycosylation occurs at Asn-3. The helical transmembrane segment at 36-56 (LLYSGLAIGGTLANGMVIYLV) threads the bilayer. The Cytoplasmic portion of the chain corresponds to 57 to 73 (SSFRKLQTTSNAFIVNG). Residues 74–94 (CAADLSVCALWMPQEAVLGLL) traverse the membrane as a helical segment. The Extracellular portion of the chain corresponds to 95–116 (PAGSAEPPGDWDSGGGSYRLLR). A helical transmembrane segment spans residues 117-136 (GGLLGLGLTVSLLSHCLVAL). Residues 137 to 158 (NRYLLITRAPATYQVLYQRRHT) lie on the Cytoplasmic side of the membrane. Residues 159–179 (AGMLALSWALALGLVLLLPPW) form a helical membrane-spanning segment. Topologically, residues 180–195 (APKPGAEPPQVHYPAL) are extracellular. A helical transmembrane segment spans residues 196 to 216 (LAAGALLAQTALLLHCYLGIV). At 217–285 (RRVRVSVKRV…RAQRRLSGLS (69 aa)) the chain is on the cytoplasmic side. Residues 286–306 (VLLLCCVFLLATQPLVWVSLA) form a helical membrane-spanning segment. Over 307–310 (SGFS) the chain is Extracellular. A helical transmembrane segment spans residues 311-331 (LPVPWGVQAASWLLCCALSAL). Residues 332-384 (NPLLYTWRNEEFRRSVRSVLPGVGDAAAAAAAATAVPAMSQAQLGTRAAGQHW) are Cytoplasmic-facing.

This sequence belongs to the G-protein coupled receptor 1 family. Expressed predominantly in the striatum. Expressed also in olfactory tubercle, nucleus accumbens, amygdala, and neocortex. Spinal cord, pons, and medulla expression remains discrete. Also expressed in peripheral tissues, including adrenal cortex (16 dpc to 21 dpc) and cochlear ganglia (19 dpc to P3) and also at moderate levels in retina (18 dpc to 19 dpc) and spleen (21 dpc to P7).

It localises to the cell membrane. The protein resides in the cell projection. The protein localises to the cilium membrane. Its subcellular location is the cytoplasm. It is found in the nucleus. Its function is as follows. Orphan G protein-coupled receptor implicated in a large repertoire of behavioral responses that engage motor activities, spatial learning, and emotional processing. May play a role in the regulation of cognitive and motor function. Couples with the heterotrimeric G protein complex of the G(i) subfamily, consisting of GNAI1, GNB1 and GNG2, thereby acting through a G(i)-mediated pathway. Plays a role in the attenuation of D1 dopamine receptor (D1R)-mediated cAMP response in ciliated cells. In non-ciliated cells, involved in the inhibition of the beta-2 adrenergic receptor (B2AR) response. This chain is G protein-coupled receptor 88 (Gpr88), found in Rattus norvegicus (Rat).